Reading from the N-terminus, the 397-residue chain is Elongation factor Tu (397 aa).

The region spanning Lys-10 to Glu-207 is the tr-type G domain. The interval Gly-19–Thr-26 is G1. Gly-19–Thr-26 provides a ligand contact to GTP. Thr-26 lines the Mg(2+) pocket. Residues Gly-60–Ala-64 form a G2 region. The tract at residues Asp-81 to Gly-84 is G3. Residues Asp-81–His-85 and Asn-136–Asp-139 each bind GTP. The segment at Asn-136 to Asp-139 is G4. The interval Ser-174 to Leu-176 is G5.

Belongs to the TRAFAC class translation factor GTPase superfamily. Classic translation factor GTPase family. EF-Tu/EF-1A subfamily. As to quaternary structure, monomer.

The protein localises to the cytoplasm. It carries out the reaction GTP + H2O = GDP + phosphate + H(+). In terms of biological role, GTP hydrolase that promotes the GTP-dependent binding of aminoacyl-tRNA to the A-site of ribosomes during protein biosynthesis. This Oleidesulfovibrio alaskensis (strain ATCC BAA-1058 / DSM 17464 / G20) (Desulfovibrio alaskensis) protein is Elongation factor Tu.